The chain runs to 126 residues: Probable glycine cleavage system H protein (126 aa).

Residues 24–106 (VVRVGITDFA…FGDGWLLEVE (83 aa)) form the Lipoyl-binding domain. Lysine 65 is modified (N6-lipoyllysine).

Belongs to the GcvH family. As to quaternary structure, the glycine cleavage system is composed of four proteins: P, T, L and H. The cofactor is (R)-lipoate.

The glycine cleavage system catalyzes the degradation of glycine. The H protein shuttles the methylamine group of glycine from the P protein to the T protein. The protein is Probable glycine cleavage system H protein of Natronomonas pharaonis (strain ATCC 35678 / DSM 2160 / CIP 103997 / JCM 8858 / NBRC 14720 / NCIMB 2260 / Gabara) (Halobacterium pharaonis).